The sequence spans 207 residues: Outer-membrane lipoprotein LolB (207 aa).

The first 21 residues, 1–21 (MPMRKRHFYRLLPLASLLLAA), serve as a signal peptide directing secretion. Residue C22 is the site of N-palmitoyl cysteine attachment. Residue C22 is the site of S-diacylglycerol cysteine attachment.

It belongs to the LolB family. In terms of assembly, monomer.

The protein localises to the cell outer membrane. In terms of biological role, plays a critical role in the incorporation of lipoproteins in the outer membrane after they are released by the LolA protein. In Yersinia pseudotuberculosis serotype IB (strain PB1/+), this protein is Outer-membrane lipoprotein LolB.